A 249-amino-acid chain; its full sequence is Chromosome-partitioning ATPase Soj (249 aa).

Positions 15, 16, 17, 18, 19, 20, 21, 22, 207, and 209 each coordinate ATP. G17 is an ADP binding site. Residues G19, K20, T21, T22, P207, and N209 each contribute to the ADP site. T21 is a Mg(2+) binding site.

Belongs to the ParA family. As to quaternary structure, monomer in the absence of nucleotides or presence of ADP, in the presence of ATP is found in a monomer-dimer equilibrium. ATP-binding is required for DNA-binding. Probably interacts with Spo0J.

It carries out the reaction ATP + H2O = ADP + phosphate + H(+). With respect to regulation, ATPase activity is stimulated 10-fold in the presence of Spo0J and parS DNA (a plasmid centromere-like site or plasmid DNA itself). The first 20 residues of Spo0J stimulate its ATPase activity by 8%. In terms of biological role, ATPase probably involved in chromosome partitioning. Cooperatively binds dsDNA, forming nucleoprotein filaments in a strictly ATP-dependent fashion. Can also bind ssDNA with lower affinity. The polypeptide is Chromosome-partitioning ATPase Soj (Thermus thermophilus (strain ATCC BAA-163 / DSM 7039 / HB27)).